Reading from the N-terminus, the 376-residue chain is tRNA-specific 2-thiouridylase MnmA (376 aa).

Residues 17-24 and M43 contribute to the ATP site; that span reads GMSGGVDS. Positions 103-105 are interaction with target base in tRNA; that stretch reads NPD. Catalysis depends on C108, which acts as the Nucleophile. Residues C108 and C204 are joined by a disulfide bond. G132 lines the ATP pocket. The segment at 154 to 156 is interaction with tRNA; the sequence is KDQ. C204 acts as the Cysteine persulfide intermediate in catalysis. Residues 316–317 are interaction with tRNA; sequence RY.

Belongs to the MnmA/TRMU family.

The protein resides in the cytoplasm. It carries out the reaction S-sulfanyl-L-cysteinyl-[protein] + uridine(34) in tRNA + AH2 + ATP = 2-thiouridine(34) in tRNA + L-cysteinyl-[protein] + A + AMP + diphosphate + H(+). Its function is as follows. Catalyzes the 2-thiolation of uridine at the wobble position (U34) of tRNA, leading to the formation of s(2)U34. In Pseudomonas savastanoi pv. phaseolicola (strain 1448A / Race 6) (Pseudomonas syringae pv. phaseolicola (strain 1448A / Race 6)), this protein is tRNA-specific 2-thiouridylase MnmA.